The sequence spans 620 residues: MVLEDRKDGSSLPGRSGSFSKSSPSELDVVDPYKRISSPGSILDAEKVEKKPGGWRAVSFILGNETLERLGSIGLLANFMVYLTKVFHLEQVDAANVINIWSGFTNLTPLVGAYISDTYVGRFKTIAFASFATLLGLITITLTASFPQLHPASCNSQDPLSCGGPNKLQIGVLLLGLCFLSVGSGGIRPCSIPFGVDQFDQRTEEGVKGVASFFNWYYMTFTVVLIITQTVVVYIQDQVSWIIGFSIPTGLMALAVVMFFAGMKRYVYVKPEGSIFSGIAQVIVAARKKRKLKLPAEDDGTVTYYDPAIKSSVLSKLHRSNQFRCLDKAAVVIEGDLTPEGPPADKWRLCSVQEVEEVKCLIRIVPIWSAGIISLAAMTTQGTFTVSQALKMDRNLGPKFEIPAGSLSVISLLTIGIFLPFYDRVFVPFMRRITGHKSGITLLQRIGTGIVFAIFSMIVAGIVERMRRIRSINAGDPTGMTPMSVFWLSPQLILMGLCEAFNIIGQIEFFNSQFPEHMRSIANSLFSLSFAGSSYLSSFLVTVVHKFSGGHDRPDWLNKNLNAGKLDYFYYLIAVLGVVNLVYFWYCARGYRYKVGLPIEDFEEDKSSDDVEMTSKKSMK.

A disordered region spans residues 1 to 32 (MVLEDRKDGSSLPGRSGSFSKSSPSELDVVDP). Residues 10-25 (SSLPGRSGSFSKSSPS) are compositionally biased toward low complexity. Helical transmembrane passes span 70 to 90 (LGSIGLLANFMVYLTKVFHLE), 95 to 115 (ANVINIWSGFTNLTPLVGAYI), 126 to 146 (IAFASFATLLGLITITLTASF), 167 to 187 (KLQIGVLLLGLCFLSVGSGGI), 213 to 233 (FFNWYYMTFTVVLIITQTVVV), 241 to 261 (WIIGFSIPTGLMALAVVMFFA), 364 to 384 (IVPIWSAGIISLAAMTTQGTF), 402 to 422 (IPAGSLSVISLLTIGIFLPFY), 443 to 463 (LQRIGTGIVFAIFSMIVAGIV), 485 to 505 (VFWLSPQLILMGLCEAFNIIG), 524 to 544 (SLFSLSFAGSSYLSSFLVTVV), and 568 to 588 (YFYYLIAVLGVVNLVYFWYCA).

This sequence belongs to the major facilitator superfamily. Proton-dependent oligopeptide transporter (POT/PTR) (TC 2.A.17) family. Interacts with NLA. Ubiquitinated by NLA. Ubiquitination of NPF2.13 leads to its degradation by the proteasome. Expressed in leaves and flowers. Detected in stems and siliques. Highest expression in the distal lamina of older leaves. Restricted to the sieve element and companion cell complex of the minor vein.

The protein localises to the cell membrane. Low-affinity proton-dependent nitrate transporter. Not involved in dipeptides transport, but has a weak glucosinolate transport activity. Involved in phloem loading and nitrate remobilization from the older leaves to other tissues. The chain is Protein NRT1/ PTR FAMILY 2.13 (NPF2.13) from Arabidopsis thaliana (Mouse-ear cress).